Consider the following 291-residue polypeptide: Light-independent protochlorophyllide reductase iron-sulfur ATP-binding protein (291 aa).

Residues Gly10–Thr15 and Lys39 each bind ATP. Mg(2+) is bound at residue Ser14. Positions 95 and 129 each coordinate [4Fe-4S] cluster. Asn180 to Arg181 contacts ATP.

This sequence belongs to the NifH/BchL/ChlL family. As to quaternary structure, homodimer. Protochlorophyllide reductase is composed of three subunits; ChlL, ChlN and ChlB. It depends on [4Fe-4S] cluster as a cofactor.

Its subcellular location is the plastid. The protein resides in the chloroplast. It carries out the reaction chlorophyllide a + oxidized 2[4Fe-4S]-[ferredoxin] + 2 ADP + 2 phosphate = protochlorophyllide a + reduced 2[4Fe-4S]-[ferredoxin] + 2 ATP + 2 H2O. It functions in the pathway porphyrin-containing compound metabolism; chlorophyll biosynthesis (light-independent). Functionally, component of the dark-operative protochlorophyllide reductase (DPOR) that uses Mg-ATP and reduced ferredoxin to reduce ring D of protochlorophyllide (Pchlide) to form chlorophyllide a (Chlide). This reaction is light-independent. The L component serves as a unique electron donor to the NB-component of the complex, and binds Mg-ATP. The polypeptide is Light-independent protochlorophyllide reductase iron-sulfur ATP-binding protein (Larix decidua (European larch)).